The chain runs to 128 residues: MALPKDMRLKGHRTFNYIHKNSITYHGKLMTFKVARSNPGILLTHKLKNTSNKFRVAIAISKKVSKKAVERNKLRRILQEWLLTNIQKINNHKPYWLLVNLKFGDFCNDKSKLLEEFQNLMFKSRLIK.

The protein belongs to the RnpA family. In terms of assembly, consists of a catalytic RNA component (M1 or rnpB) and a protein subunit.

It catalyses the reaction Endonucleolytic cleavage of RNA, removing 5'-extranucleotides from tRNA precursor.. Functionally, RNaseP catalyzes the removal of the 5'-leader sequence from pre-tRNA to produce the mature 5'-terminus. It can also cleave other RNA substrates such as 4.5S RNA. The protein component plays an auxiliary but essential role in vivo by binding to the 5'-leader sequence and broadening the substrate specificity of the ribozyme. The protein is Ribonuclease P protein component of Prochlorococcus marinus (strain MIT 9301).